The following is a 75-amino-acid chain: MQVLVRDNNVDQALRALKKKMQREGIFREMKMRDYYEKPSQKRAREKAEAVRRVRKLARKRAQREGLIAAPRASR.

The protein belongs to the bacterial ribosomal protein bS21 family.

The polypeptide is Small ribosomal subunit protein bS21A (rpsU1) (Agrobacterium fabrum (strain C58 / ATCC 33970) (Agrobacterium tumefaciens (strain C58))).